Consider the following 362-residue polypeptide: uncharacterized protein (362 aa).

This is an uncharacterized protein from Escherichia coli (strain K12).